Reading from the N-terminus, the 55-residue chain is Large ribosomal subunit protein bL33A (55 aa).

The protein belongs to the bacterial ribosomal protein bL33 family.

This Mycobacterium ulcerans (strain Agy99) protein is Large ribosomal subunit protein bL33A.